An 82-amino-acid chain; its full sequence is Costars family protein v1g158749 (82 aa).

It belongs to the costars family.

The sequence is that of Costars family protein v1g158749 from Nematostella vectensis (Starlet sea anemone).